Consider the following 856-residue polypeptide: MISPDQQYETDTNLYNPSEIEKKWQSIWTENNLYKTDELTDNSDKFYALSMFPYPSGNLHMGHVRNYVITDLIARFQRFKGKSVLHPMGWDAFGLPAENAAIERGISPSVWTKKNISHMKSQLKLLGLSVDWDREFATCDENYYVWTQYLFLELYKAGLVYQKESEVNWDPIDNTVLANEQVDSEGKSWRSGAIVEKKLLKQWFLRITNYADELLKDLEKLDNWPERVKIMQDNWIGKSIGTNINFNINTHPEKKLTVFTTRPDTLFGVTYLAISVNHSLIKNISDQETIQHIENLKKYLKKNKNNELEKIGIKTSLIAINPVNSEPIPIWVASYVLDEYGTGAVMGVPAHDLRDFEFAKKNNIDIKQVIIKDKSEQNKELDEAYVENGYLINSNQYDGVANTIAKLKISEEGVNNRWAENKTQYRLRDWLISRQRYWGCPIPIVNCKKCGSVPLNQSELPVALPKDIDISANKINALGDNKNWVNTTCPKCGIAAKKETDTMDTFMCSSWYFLRYPSSKCPNKPFEKIEINKWLPVDQYVGGVEHAILHLLYARFFTKALRDNQLFEIDEPFKKLLTQGMVQAAAYKNNKTGKYVSPSDINDLSNPTDPIDNTKLEILFEKMSKSKYNGIDPESVIKKYGADTARMFILFKAPPEKDLEWGDTDVEGQFRFLSRIWKLYINCAKNVNIKSNSYPDKEKSLIKSMNIAIKEISNDILNNQFNTAISELMKFYNSLSNSINDVNNNLKIDALKTFCILLAPFAPHIAEEIWHLIGFKKSVHLEHWPSFNAEALKEDSYELVIQVNGKVREKVNINHDMNEDQIKELTLKRPNILKWTKDKEIRKIIIVKGKIMNIVV.

The short motif at 53-63 (PYPSGNLHMGH) is the 'HIGH' region element. Residues 622 to 626 (KMSKS) carry the 'KMSKS' region motif. Lysine 625 serves as a coordination point for ATP.

It belongs to the class-I aminoacyl-tRNA synthetase family.

It is found in the cytoplasm. The catalysed reaction is tRNA(Leu) + L-leucine + ATP = L-leucyl-tRNA(Leu) + AMP + diphosphate. This is Leucine--tRNA ligase from Prochlorococcus marinus (strain MIT 9301).